The chain runs to 536 residues: Probable cytochrome P450 520A1 (536 aa).

The chain crosses the membrane as a helical span at residues 1 to 21 (MEILTFIIYLITFFILFDFYK). Cysteine 479 is a binding site for heme.

It belongs to the cytochrome P450 family. It depends on heme as a cofactor.

It localises to the membrane. This is Probable cytochrome P450 520A1 (cyp520A1) from Dictyostelium discoideum (Social amoeba).